The sequence spans 272 residues: Shikimate dehydrogenase (NADP(+)) (272 aa).

Residues 14–16 (SKS) and T61 each bind shikimate. The active-site Proton acceptor is K65. E77 lines the NADP(+) pocket. Residues N86 and D102 each contribute to the shikimate site. NADP(+) is bound by residues 126–130 (GAGGA), 149–154 (NRTFSR), and M213. Y215 contacts shikimate. G237 contacts NADP(+).

Belongs to the shikimate dehydrogenase family. As to quaternary structure, homodimer.

The catalysed reaction is shikimate + NADP(+) = 3-dehydroshikimate + NADPH + H(+). The protein operates within metabolic intermediate biosynthesis; chorismate biosynthesis; chorismate from D-erythrose 4-phosphate and phosphoenolpyruvate: step 4/7. Its function is as follows. Involved in the biosynthesis of the chorismate, which leads to the biosynthesis of aromatic amino acids. Catalyzes the reversible NADPH linked reduction of 3-dehydroshikimate (DHSA) to yield shikimate (SA). This Photorhabdus laumondii subsp. laumondii (strain DSM 15139 / CIP 105565 / TT01) (Photorhabdus luminescens subsp. laumondii) protein is Shikimate dehydrogenase (NADP(+)).